The following is a 346-amino-acid chain: DNA-directed RNA polymerases I and III subunit RPAC1 (346 aa).

A2 is modified (N-acetylalanine).

The protein belongs to the archaeal Rpo3/eukaryotic RPB3 RNA polymerase subunit family. Component of the RNA polymerase I and RNA polymerase III complexes consisting of at least 13 and 17 subunits, respectively. Pol I complex consists of a ten-subunit catalytic core composed of POLR1A/RPA1, POLR1B/RPA2, POLR1C/RPAC1, POLR1D/RPAC2, POLR1H/RPA12, POLR2E/RPABC1, POLR2F/RPABC2, POLR2H/RPABC3, POLR2K/RPABC4 and POLR2L/RPABC5; a mobile stalk subunit POLR1F/RPA43 protruding from the core and additional subunits homologous to general transcription factors POLR1E/RPA49 and POLR1G/RPA34. Part of Pol I pre-initiation complex (PIC), in which Pol I core assembles with RRN3 and promoter-bound UTBF and SL1/TIF-IB complex. Pol III complex consists of a ten-subunit catalytic core composed of POLR3A/RPC1, POLR3B/RPC2, POLR1C/RPAC1, POLR1D/RPAC2, POLR3K/RPC10, POLR2E/RPABC1, POLR2F/RPABC2, POLR2H/RPABC3, POLR2K/RPABC4 and POLR2L/RPABC5; a mobile stalk composed of two subunits POLR3H/RPC8 and CRCP/RPC9, protruding from the core and functioning primarily in transcription initiation; and additional subunits homologous to general transcription factors of the RNA polymerase II machinery, POLR3C/RPC3-POLR3F/RPC6-POLR3G/RPC7 heterotrimer required for transcription initiation and POLR3D/RPC4-POLR3E/RPC5 heterodimer involved in both transcription initiation and termination.

The protein localises to the nucleus. The protein resides in the cytoplasm. Its subcellular location is the cytosol. Its function is as follows. DNA-dependent RNA polymerase catalyzes the transcription of DNA into RNA using the four ribonucleoside triphosphates as substrates. Common component of RNA polymerases I and III which synthesize ribosomal RNA precursors and short non-coding RNAs including 5S rRNA, snRNAs, tRNAs and miRNAs, respectively. POLR1C/RPAC1 is part of the polymerase core and may function as a clamp element that moves to open and close the cleft. The protein is DNA-directed RNA polymerases I and III subunit RPAC1 of Mus musculus (Mouse).